Reading from the N-terminus, the 450-residue chain is Sensor histidine kinase EnvZ (450 aa).

Over 1 to 15 (MRRLRFSPRSSFART) the chain is Cytoplasmic. A helical membrane pass occupies residues 16–35 (LLLIVTLLFASLVTTYLVVL). Topologically, residues 36 to 158 (NFAILPSLQQ…LTEIHQGDFS (123 aa)) are periplasmic. A polyP-periplasmic motif motif is present at residues 71-75 (VVPPA). A helical transmembrane segment spans residues 159-179 (PLFRYTLAIMLLAIGGAWLFI). One can recognise an HAMP domain in the interval 180–232 (RIQNRPLVDLEHAALQVGKGIIPPPLREYGASEVRSVTRAFNHMAAGVKQLAD). Topologically, residues 180 to 450 (RIQNRPLVDL…TRAQGTTKEG (271 aa)) are cytoplasmic. The short motif at 201–205 (IPPPL) is the polyP-cytoplasmic motif element. The interval 223-289 (MAAGVKQLAD…IIEQFIDYLR (67 aa)) is cytoplasmic dimerization domain (CDD), when dimerized forms osmosensitive core. The Histidine kinase domain occupies 240 to 440 (GVSHDLRTPL…SIRAWLPVPV (201 aa)). Residues H243, 347–351 (NAARY), D373, 392–393 (RG), and 402–406 (TGLGL) each bind ATP. H243 carries the post-translational modification Phosphohistidine; by autocatalysis.

In terms of assembly, homodimer. Interacts with MzrA. In terms of processing, autophosphorylated. Incubation of isolated EnvZ C-terminal fragment (residues 180-450) with increasing levels of NaCl or sucrose increases its autophosphorylation.

It is found in the cell inner membrane. It carries out the reaction ATP + protein L-histidine = ADP + protein N-phospho-L-histidine.. Activity is modulated by MzrA. In the presence of 0.2 M NaCl, 2.0 mM sodium cholate (bile salts) decreases expression from the ompC promoter; how this is mediated is unknown. Autophosphorylation is inhibited by the angucycline antibiotic waldiomycin in a non-competitive manner; waldiomycin prevents dimerization of the cytoplasmic domain and autophosphorylation. Functionally, member of the two-component regulatory system EnvZ/OmpR involved in osmoregulation (particularly of genes ompF and ompC) as well as other genes. EnvZ functions as a membrane-associated protein kinase that phosphorylates OmpR in response to environmental signals; at low osmolarity OmpR activates ompF transcription, while at high osmolarity it represses ompF and activates ompC transcription. Also dephosphorylates OmpR in the presence of ATP. The cytoplasmic dimerization domain (CDD) forms an osmosensitive core; increasing osmolarity stabilizes this segment (possibly by its contraction), enhancing the autophosphorylation rate and consequently, downstream phosphotransfer to OmpR and signaling. Autophosphorylation is greater when full-length EnvZ is reconstituted in a lipid environment, lipid-mediated allostery impacts the kinase function of EnvZ. Involved in acid stress response; this requires EnvZ but not OmpR phosphorylation, and suggests that EnvZ senses cytoplasmic acidic pH. This Escherichia coli (strain K12) protein is Sensor histidine kinase EnvZ (envZ).